The sequence spans 218 residues: Ribose-5-phosphate isomerase A (218 aa).

Substrate-binding positions include T28 to T31, D81 to D84, and K94 to G97. E103 acts as the Proton acceptor in catalysis. K121 serves as a coordination point for substrate.

The protein belongs to the ribose 5-phosphate isomerase family. As to quaternary structure, homodimer.

The catalysed reaction is aldehydo-D-ribose 5-phosphate = D-ribulose 5-phosphate. It participates in carbohydrate degradation; pentose phosphate pathway; D-ribose 5-phosphate from D-ribulose 5-phosphate (non-oxidative stage): step 1/1. In terms of biological role, catalyzes the reversible conversion of ribose-5-phosphate to ribulose 5-phosphate. This is Ribose-5-phosphate isomerase A from Buchnera aphidicola subsp. Baizongia pistaciae (strain Bp).